The sequence spans 230 residues: 5'-methylthioadenosine/S-adenosylhomocysteine nucleosidase (230 aa).

Glutamate 12 (proton acceptor) is an active-site residue. Residues glycine 78, methionine 153, and 174–175 each bind substrate; that span reads ME. Aspartate 198 (proton donor) is an active-site residue.

It belongs to the PNP/UDP phosphorylase family. MtnN subfamily.

The enzyme catalyses S-adenosyl-L-homocysteine + H2O = S-(5-deoxy-D-ribos-5-yl)-L-homocysteine + adenine. The catalysed reaction is S-methyl-5'-thioadenosine + H2O = 5-(methylsulfanyl)-D-ribose + adenine. It catalyses the reaction 5'-deoxyadenosine + H2O = 5-deoxy-D-ribose + adenine. It participates in amino-acid biosynthesis; L-methionine biosynthesis via salvage pathway; S-methyl-5-thio-alpha-D-ribose 1-phosphate from S-methyl-5'-thioadenosine (hydrolase route): step 1/2. Functionally, catalyzes the irreversible cleavage of the glycosidic bond in both 5'-methylthioadenosine (MTA) and S-adenosylhomocysteine (SAH/AdoHcy) to adenine and the corresponding thioribose, 5'-methylthioribose and S-ribosylhomocysteine, respectively. Also cleaves 5'-deoxyadenosine, a toxic by-product of radical S-adenosylmethionine (SAM) enzymes, into 5-deoxyribose and adenine. The protein is 5'-methylthioadenosine/S-adenosylhomocysteine nucleosidase of Lysinibacillus sphaericus (strain C3-41).